We begin with the raw amino-acid sequence, 136 residues long: Small ribosomal subunit protein uS19 (136 aa).

This sequence belongs to the universal ribosomal protein uS19 family.

Functionally, protein S19 forms a complex with S13 that binds strongly to the 16S ribosomal RNA. This chain is Small ribosomal subunit protein uS19, found in Methanothrix thermoacetophila (strain DSM 6194 / JCM 14653 / NBRC 101360 / PT) (Methanosaeta thermophila).